The chain runs to 150 residues: Large ribosomal subunit protein uL15 (150 aa).

Positions 1 to 57 (MSLTLQSLKPQKGARRRKMRKGRGIAAGQGASCGFGMRGQKSRSGRPTRPGFEGGQM) are disordered. The span at 12-23 (KGARRRKMRKGR) shows a compositional bias: basic residues. Over residues 25–37 (IAAGQGASCGFGM) the composition is skewed to gly residues.

It belongs to the universal ribosomal protein uL15 family. In terms of assembly, part of the 50S ribosomal subunit.

In terms of biological role, binds to the 23S rRNA. The sequence is that of Large ribosomal subunit protein uL15 from Synechococcus sp. (strain RCC307).